The primary structure comprises 656 residues: Receptor-type tyrosine-protein phosphatase R (656 aa).

The N-terminal stretch at 1-23 (MRRAVGFPALCLLLNLHAAGCFS) is a signal peptide. An O-linked (Xyl...) (chondroitin sulfate) serine glycan is attached at Ser23. Residues 25-225 (NNDHFLAIRQ…HEADKIWSKE (201 aa)) lie on the Extracellular side of the membrane. A glycan (N-linked (GlcNAc...) asparagine) is linked at Asn128. Residues 226 to 248 (GFYAVVIFLSIFIIIVTCLMIIY) form a helical membrane-spanning segment. The Cytoplasmic portion of the chain corresponds to 249-656 (RLKERLQLSF…ESRLSPETVQ (408 aa)). Ser271 carries the phosphoserine modification. Residue Ser338 is modified to Phosphoserine; by PKA. Positions 392–646 (LQSEFMEIPM…EFVHHALCLF (255 aa)) constitute a Tyrosine-protein phosphatase domain. Residues Asp553, 587–593 (CSAGIGR), and Gln631 contribute to the substrate site. Cys587 acts as the Phosphocysteine intermediate in catalysis.

This sequence belongs to the protein-tyrosine phosphatase family. Receptor class 7 subfamily. As to quaternary structure, interacts with MAPKs. As to expression, widely expressed in the brain, most abundant in cerebellum, midbrain, cerebral cortex and hippocampus. Also expressed in heart and skeletal muscle.

Its subcellular location is the cytoplasm. It is found in the cell membrane. It carries out the reaction O-phospho-L-tyrosyl-[protein] + H2O = L-tyrosyl-[protein] + phosphate. Its function is as follows. Sequesters mitogen-activated protein kinases (MAPKs) such as MAPK1, MAPK3 and MAPK14 in the cytoplasm in an inactive form. The MAPKs bind to a dephosphorylated kinase interacting motif, phosphorylation of which by the protein kinase A complex releases the MAPKs for activation and translocation into the nucleus. The protein is Receptor-type tyrosine-protein phosphatase R (Ptprr) of Rattus norvegicus (Rat).